Consider the following 212-residue polypeptide: Ras-related protein Rab-2A (212 aa).

A2 carries the post-translational modification N-acetylalanine. Positions 2–19 (AYAYLFKYIIIGDTGVGK) are required for interaction with PRKCI. 7 residues coordinate GTP: G16, V17, G18, K19, S20, C21, and T38. A Mg(2+)-binding site is contributed by S20. A Switch 1 motif is present at residues 37–42 (LTIGVE). Residues T38 and D61 each contribute to the Mg(2+) site. Residues 63–72 (AGQESFRSIT) carry the Switch 2 motif. The GTP site is built by G64, N119, K120, D122, A150, and K151. S-geranylgeranyl cysteine attachment occurs at residues C211 and C212.

Belongs to the small GTPase superfamily. Rab family. As to quaternary structure, interacts with PRKCI. Interacts with TRIP11. Interacts (in GTP-bound form) with GARIN1B. Interacts (GTP-bound) with HOPS complex component VPS39; interaction contributes to obtaining a functional HOPS complex that promotes autophagosome-lysosome membrane fusion driven by STX17-SNAP29-VAMP8. May interact with VPS41. Requires Mg(2+) as cofactor. Prenylated. Prenylation is required for association with cellular membranes. As to expression, brain and parietal cells.

It is found in the endoplasmic reticulum-Golgi intermediate compartment membrane. The protein localises to the melanosome. The protein resides in the endoplasmic reticulum membrane. It localises to the golgi apparatus membrane. Its subcellular location is the cytoplasmic vesicle. It is found in the secretory vesicle. The protein localises to the acrosome. The protein resides in the autophagosome membrane. It catalyses the reaction GTP + H2O = GDP + phosphate + H(+). Regulated by guanine nucleotide exchange factors (GEFs) which promote the exchange of bound GDP for free GTP, GTPase activating proteins (GAPs) which increase the GTP hydrolysis activity, and GDP dissociation inhibitors (GDIs) which inhibit the dissociation of the nucleotide from the GTPase. In terms of biological role, the small GTPases Rab are key regulators of intracellular membrane trafficking, from the formation of transport vesicles to their fusion with membranes. Rabs cycle between active GTP-bound and inactive GDP-bound states. In their active state, drive transport of vesicular carriers from donor organelles to acceptor organelles to regulate the membrane traffic that maintains organelle identity and morphology. RAB2A regulates autophagy by promoting autophagosome-lysosome fusion via recruitment of the HOPS endosomal tethering complex; this process involves autophagosomal RAB2A and lysosomal RAB39A recruitment of HOPS subcomplexes VPS39-VPS11 and VPS41-VPS16-VPS18-VPS33A, respectively, which assemble into a functional complex to mediate membrane tethering and SNAREs-driven membrane fusion. Required for protein transport from the endoplasmic reticulum to the Golgi complex. Regulates the compacted morphology of the Golgi. Together with RAB2B, redundantly required for efficient autophagic flux. The polypeptide is Ras-related protein Rab-2A (RAB2A) (Oryctolagus cuniculus (Rabbit)).